The primary structure comprises 364 residues: Mannose-1-phosphate guanylyltransferase catalytic subunit beta (364 aa).

Positions 2 to 220 (KALILVGGYG…PGFWMDVGQP (219 aa)) are substrate-binding domain. A GDP-alpha-D-mannose-binding site is contributed by Asp-109. Asp-109 serves as a coordination point for Mg(2+). Lys-160 is a catalytic residue. Asp-216 serves as a coordination point for GDP-alpha-D-mannose. Asp-216 is a Mg(2+) binding site. The hexapeptide repeat domain stretch occupies residues 243-364 (ATGSNIHGTA…VNVPSKDIIM (122 aa)).

This sequence belongs to the transferase hexapeptide repeat family. In terms of assembly, component of the GMPPA-GMPPB mannose-1-phosphate guanylyltransferase complex composed of 4 GMPPA subunits and 8 tag-335/GMPPB subunits; the complex is organized into three layers, a central layer made up of 2 GMPPA dimers sandwiched between two layers each made up of 2 tag-335/GMPPB dimers. Catalytic activity of tag-335/GMPPB is reduced when part of the complex and binding of GDP-alpha-D-Mannose by GMPPA induces allosteric feedback inhibition of tag-335/GMPPB. Mg(2+) serves as cofactor.

It carries out the reaction alpha-D-mannose 1-phosphate + GTP + H(+) = GDP-alpha-D-mannose + diphosphate. It functions in the pathway nucleotide-sugar biosynthesis; GDP-alpha-D-mannose biosynthesis; GDP-alpha-D-mannose from alpha-D-mannose 1-phosphate (GTP route): step 1/1. Its activity is regulated as follows. Enzyme activity is reduced by incorporation into the GMPPA-GMPPB mannose-1-phosphate guanylyltransferase complex. Allosterically inhibited, when part of the GMPPA-GMPPB complex, by GDP-alpha-D-mannose binding to GMPPA. Its function is as follows. Catalytic subunit of the GMPPA-GMPPB mannose-1-phosphate guanylyltransferase complex. Catalyzes the formation of GDP-mannose, an essential precursor of glycan moieties of glycoproteins and glycolipids. Can catalyze the reverse reaction in vitro. Together with GMPPA regulates GDP-alpha-D-mannose levels. In Caenorhabditis briggsae, this protein is Mannose-1-phosphate guanylyltransferase catalytic subunit beta.